We begin with the raw amino-acid sequence, 253 residues long: Adapter protein MecA (253 aa).

Belongs to the MecA family. As to quaternary structure, homodimer.

Its function is as follows. Enables the recognition and targeting of unfolded and aggregated proteins to the ClpC protease or to other proteins involved in proteolysis. The chain is Adapter protein MecA from Streptococcus pyogenes serotype M18 (strain MGAS8232).